A 155-amino-acid chain; its full sequence is Ribosomal RNA large subunit methyltransferase H (155 aa).

S-adenosyl-L-methionine contacts are provided by residues Leu72, Gly103, and 122-127 (FGRMVW).

This sequence belongs to the RNA methyltransferase RlmH family. As to quaternary structure, homodimer.

It localises to the cytoplasm. The catalysed reaction is pseudouridine(1915) in 23S rRNA + S-adenosyl-L-methionine = N(3)-methylpseudouridine(1915) in 23S rRNA + S-adenosyl-L-homocysteine + H(+). Specifically methylates the pseudouridine at position 1915 (m3Psi1915) in 23S rRNA. In Paracoccus denitrificans (strain Pd 1222), this protein is Ribosomal RNA large subunit methyltransferase H.